The chain runs to 500 residues: Ent-cassadiene C11-alpha-hydroxylase 1 (500 aa).

Residues 4 to 24 form a helical membrane-spanning segment; it reads SQVWLLWGALSVAVLFYLSTL. Residue Cys442 participates in heme binding.

Belongs to the cytochrome P450 family. It depends on heme as a cofactor.

The protein localises to the membrane. It carries out the reaction ent-cassa-12,15-diene + reduced [NADPH--hemoprotein reductase] + O2 = ent-11beta-hydroxycassa-12,15-diene + oxidized [NADPH--hemoprotein reductase] + H2O + H(+). Enzyme of the diterpenoid metabolism involved in the biosynthesis of antibacterial oryzalides such as phytocassane. Can use ent-cassadiene as substrate, but not C11-alpha-hydroxy-ent-cassadiene, ent-pimaradiene, ent-sandaracopimaradiene, ent-kaurene, ent-isokaurene, syn-pimaradiene, syn-stemarene, syn-stemodene. In Oryza sativa subsp. japonica (Rice), this protein is Ent-cassadiene C11-alpha-hydroxylase 1.